The chain runs to 229 residues: Germin-like protein 12-1 (229 aa).

An N-terminal signal peptide occupies residues 1–22 (MASSNFFLPTALIALVATQAMA). The cysteines at positions 32 and 47 are disulfide-linked. The Cupin type-1 domain maps to 62-217 (ANLDKPMDTT…AFQVDKKAVD (156 aa)). Asn-78 carries N-linked (GlcNAc...) asparagine glycosylation. Positions 111, 113, 118, and 162 each coordinate Mn(2+).

The protein belongs to the germin family. As to quaternary structure, oligomer (believed to be a pentamer but probably hexamer).

It is found in the secreted. It localises to the extracellular space. The protein resides in the apoplast. Functionally, may play a role in plant defense. Probably has no oxalate oxidase activity even if the active site is conserved. This Oryza sativa subsp. japonica (Rice) protein is Germin-like protein 12-1.